A 431-amino-acid chain; its full sequence is Leucine carboxyl methyltransferase 1 (431 aa).

S-adenosyl-L-methionine is bound by residues R103, G131, D159, and 219–220 (DL). The interval 228–268 (QPQQPLPPGVPIGSRGLHASPFTPGSTTQHEEQTEETSLPQ) is disordered. S-adenosyl-L-methionine is bound at residue E289.

The protein belongs to the methyltransferase superfamily. LCMT family.

It catalyses the reaction [phosphatase 2A protein]-C-terminal L-leucine + S-adenosyl-L-methionine = [phosphatase 2A protein]-C-terminal L-leucine methyl ester + S-adenosyl-L-homocysteine. In terms of biological role, methylates the carboxyl group of the C-terminal leucine residue of protein phosphatase 2A catalytic subunits to form alpha-leucine ester residues. This is Leucine carboxyl methyltransferase 1 (ppm-1) from Neurospora crassa (strain ATCC 24698 / 74-OR23-1A / CBS 708.71 / DSM 1257 / FGSC 987).